Consider the following 466-residue polypeptide: MADGKIVQCIGAVVDVEFPRNAMPKIYDALKMAGSELTLEVQQQLGDGIVRTIALGTSDGLRRGMIIQNTGNPITVPVGKATLGRIMDVLGNPIDECGPVSHERTASIHRKAPAYDELSPSQDLLETGIKVIDLVCPFAKGGKVGLFGGAGVGKTVNMMELINNIAKAHSGLSVFAGVGERTREGNDFYHEMADAKVVDLENPENSKVAMVYGQMNEPPGNRLRVALTGLTMAEAFRDEGKDVLFFVDNIYRFTLAGTEVSALLGRMPSAVGYQPTLAEEMGRLQERITSTKTGSITSIQAVYVPADDLTDPSPATTFAHLDSTVVLSRDIASLGIYPAVDPLDSTSRQLDPLVVGQDHYDTARAVQGTLQRYKELRDIIAILGMDELAPEDKLLVARARKMQRFLSQPFHVAEVFTGAPGKYVSLKDTINGFKMIASGELDHLPEQAFYMVGTIEEAIEKAKKLN.

ATP is bound at residue 148-155 (GGAGVGKT).

This sequence belongs to the ATPase alpha/beta chains family. As to quaternary structure, F-type ATPases have 2 components, CF(1) - the catalytic core - and CF(0) - the membrane proton channel. CF(1) has five subunits: alpha(3), beta(3), gamma(1), delta(1), epsilon(1). CF(0) has three main subunits: a(1), b(2) and c(9-12). The alpha and beta chains form an alternating ring which encloses part of the gamma chain. CF(1) is attached to CF(0) by a central stalk formed by the gamma and epsilon chains, while a peripheral stalk is formed by the delta and b chains.

It is found in the cell inner membrane. It carries out the reaction ATP + H2O + 4 H(+)(in) = ADP + phosphate + 5 H(+)(out). Functionally, produces ATP from ADP in the presence of a proton gradient across the membrane. The catalytic sites are hosted primarily by the beta subunits. The protein is ATP synthase subunit beta of Herminiimonas arsenicoxydans.